The chain runs to 115 residues: NADH-ubiquinone oxidoreductase chain 3 (115 aa).

3 helical membrane-spanning segments follow: residues 3–23 (LLLTLLTNTTLALLLVFIAFW), 55–75 (FFLVAITFLLFDLEIALLLPL), and 84–104 (LNTMLTMALFLISLLAASLAY).

This sequence belongs to the complex I subunit 3 family. Core subunit of respiratory chain NADH dehydrogenase (Complex I) which is composed of 45 different subunits. Interacts with TMEM186. Interacts with TMEM242.

It localises to the mitochondrion inner membrane. The enzyme catalyses a ubiquinone + NADH + 5 H(+)(in) = a ubiquinol + NAD(+) + 4 H(+)(out). In terms of biological role, core subunit of the mitochondrial membrane respiratory chain NADH dehydrogenase (Complex I) which catalyzes electron transfer from NADH through the respiratory chain, using ubiquinone as an electron acceptor. Essential for the catalytic activity of complex I. This Balaenoptera musculus (Blue whale) protein is NADH-ubiquinone oxidoreductase chain 3.